A 155-amino-acid chain; its full sequence is UPF0260 protein R01011 (155 aa).

This sequence belongs to the UPF0260 family.

The chain is UPF0260 protein R01011 from Rhizobium meliloti (strain 1021) (Ensifer meliloti).